A 226-amino-acid polypeptide reads, in one-letter code: Acyl-protein thioesterase 1 homolog 1 (226 aa).

Residues Ser121, Asp174, and His206 each act as charge relay system in the active site.

Belongs to the AB hydrolase superfamily. AB hydrolase 2 family.

It localises to the cytoplasm. The protein localises to the nucleus. The enzyme catalyses S-hexadecanoyl-L-cysteinyl-[protein] + H2O = L-cysteinyl-[protein] + hexadecanoate + H(+). Functionally, hydrolyzes fatty acids from S-acylated cysteine residues in proteins with a strong preference for palmitoylated G-alpha proteins over other acyl substrates. Mediates the deacylation of G-alpha proteins such as GPA1 in vivo, but has weak or no activity toward palmitoylated Ras proteins. Has weak lysophospholipase activity in vitro; however such activity may not exist in vivo. The polypeptide is Acyl-protein thioesterase 1 homolog 1 (Dictyostelium discoideum (Social amoeba)).